The chain runs to 283 residues: NAD kinase (283 aa).

Residue Asp65 is the Proton acceptor of the active site. NAD(+)-binding positions include 65–66, 139–140, Arg150, Arg167, Asp169, 180–185, and Gln239; these read DG, ND, and TGYSVS.

Belongs to the NAD kinase family. A divalent metal cation is required as a cofactor.

Its subcellular location is the cytoplasm. The catalysed reaction is NAD(+) + ATP = ADP + NADP(+) + H(+). Involved in the regulation of the intracellular balance of NAD and NADP, and is a key enzyme in the biosynthesis of NADP. Catalyzes specifically the phosphorylation on 2'-hydroxyl of the adenosine moiety of NAD to yield NADP. This is NAD kinase from Nitratidesulfovibrio vulgaris (strain DSM 19637 / Miyazaki F) (Desulfovibrio vulgaris).